A 382-amino-acid polypeptide reads, in one-letter code: Mucosal addressin cell adhesion molecule 1 (382 aa).

Residues 1–18 form the signal peptide; it reads MDFGLALLLAGLLGLLLG. Over 19–317 the chain is Extracellular; it reads QSLQVKPLQV…TGSSKPAGDQ (299 aa). Ig-like domains follow at residues 23-112 and 113-231; these read VKPL…LLVY and AFPD…TSPE. Cystine bridges form between Cys47/Cys94, Cys51/Cys98, and Cys134/Cys204. Residue Asn83 is glycosylated (N-linked (GlcNAc...) asparagine). Positions 223 to 314 are disordered; the sequence is VLHSPTSPEP…VIPTGSSKPA (92 aa). The interval 226–317 is mucin-like; the sequence is SPTSPEPPDT…TGSSKPAGDQ (92 aa). The 1; truncated repeat unit spans residues 228-231; that stretch reads TSPE. The 5.5 X 8 AA tandem repeats of [PS]-P-D-T-T-S-[QP]-E stretch occupies residues 228-271; it reads TSPEPPDTTSPESPDTTSPESPDTTSQEPPDTTSPEPPDKTSPE. 5 consecutive repeat copies span residues 232–239, 240–247, 248–255, 256–263, and 264–271. Over residues 236–261 the composition is skewed to low complexity; that stretch reads TSPESPDTTSPESPDTTSQEPPDTTS. Over residues 277–288 the composition is skewed to low complexity; sequence GSTHTPRSPGST. The chain crosses the membrane as a helical span at residues 318–338; it reads LPAALWTSSAVLGLLLLALPT. At 339 to 382 the chain is on the cytoplasmic side; sequence YHLWKRCRHLAEDDTHPPASLRLLPQVSAWAGLRGTGQVGISPS.

As to quaternary structure, homodimer. In terms of processing, the Ser/Thr-rich mucin-like domain may provide possible sites for O-glycosylation. Highly expressed on high endothelial venules (HEV) and lamina propia venules found in the small intestine, and to a lesser extent in the colon and spleen. Very low levels of expression found in pancreas and brain. Not expressed in the thymus, prostate, ovaries, testis, heart, placenta, lung, liver, skeletal muscle, kidney or peripheral blood leukocytes.

Its subcellular location is the membrane. In terms of biological role, cell adhesion leukocyte receptor expressed by mucosal venules, helps to direct lymphocyte traffic into mucosal tissues including the Peyer patches and the intestinal lamina propria. It can bind both integrin alpha-4/beta-7 and L-selectin, regulating both the passage and retention of leukocytes. Isoform 2, lacking the mucin-like domain, may be specialized in supporting integrin alpha-4/beta-7-dependent adhesion strengthening, independent of L-selectin binding. In Homo sapiens (Human), this protein is Mucosal addressin cell adhesion molecule 1 (MADCAM1).